A 620-amino-acid chain; its full sequence is Chaperone protein HscA homolog (620 aa).

The protein belongs to the heat shock protein 70 family.

Its function is as follows. Chaperone involved in the maturation of iron-sulfur cluster-containing proteins. Has a low intrinsic ATPase activity which is markedly stimulated by HscB. The protein is Chaperone protein HscA homolog of Pseudomonas syringae pv. tomato (strain ATCC BAA-871 / DC3000).